We begin with the raw amino-acid sequence, 207 residues long: Transcription factor bHLH149 (207 aa).

The disordered stretch occupies residues 1-25; that stretch reads MVESLFPSIENTGESSRRKKPRISE. Residues 132–181 form the bHLH domain; the sequence is KSRKGLTETNRIKLPAVERKLKILGRLVPGCRKVSVPNLLDEATDYIAAL.

As to quaternary structure, homodimer. Interacts with PRE3.

It localises to the nucleus. Atypical bHLH transcription factor probably unable to bind DNA. Negatively regulates brassinosteroid signaling. This chain is Transcription factor bHLH149 (BHLH149), found in Arabidopsis thaliana (Mouse-ear cress).